A 217-amino-acid chain; its full sequence is Uridylate kinase (217 aa).

K6–R10 provides a ligand contact to ATP. Position 38 (G38) interacts with UMP. Positions 39 and 43 each coordinate ATP. UMP is bound by residues D60 and F107–T113. ATP-binding residues include N134, Y139, and D142.

The protein belongs to the UMP kinase family. As to quaternary structure, homohexamer.

The protein resides in the cytoplasm. It catalyses the reaction UMP + ATP = UDP + ADP. Its pathway is pyrimidine metabolism; CTP biosynthesis via de novo pathway; UDP from UMP (UMPK route): step 1/1. Its activity is regulated as follows. Inhibited by UTP. Catalyzes the reversible phosphorylation of UMP to UDP. In Pyrobaculum aerophilum (strain ATCC 51768 / DSM 7523 / JCM 9630 / CIP 104966 / NBRC 100827 / IM2), this protein is Uridylate kinase.